The sequence spans 335 residues: 4-hydroxythreonine-4-phosphate dehydrogenase (335 aa).

His135 and Thr136 together coordinate substrate. Residues His165, His210, and His265 each contribute to the a divalent metal cation site. Substrate-binding residues include Lys273, Asn282, and Arg291.

The protein belongs to the PdxA family. As to quaternary structure, homodimer. It depends on Zn(2+) as a cofactor. Mg(2+) is required as a cofactor. The cofactor is Co(2+).

The protein localises to the cytoplasm. The enzyme catalyses 4-(phosphooxy)-L-threonine + NAD(+) = 3-amino-2-oxopropyl phosphate + CO2 + NADH. Its pathway is cofactor biosynthesis; pyridoxine 5'-phosphate biosynthesis; pyridoxine 5'-phosphate from D-erythrose 4-phosphate: step 4/5. Its function is as follows. Catalyzes the NAD(P)-dependent oxidation of 4-(phosphooxy)-L-threonine (HTP) into 2-amino-3-oxo-4-(phosphooxy)butyric acid which spontaneously decarboxylates to form 3-amino-2-oxopropyl phosphate (AHAP). The protein is 4-hydroxythreonine-4-phosphate dehydrogenase of Saccharophagus degradans (strain 2-40 / ATCC 43961 / DSM 17024).